The chain runs to 227 residues: Translation initiation factor 6 (227 aa).

Belongs to the eIF-6 family.

Binds to the 50S ribosomal subunit and prevents its association with the 30S ribosomal subunit to form the 70S initiation complex. The chain is Translation initiation factor 6 from Staphylothermus marinus (strain ATCC 43588 / DSM 3639 / JCM 9404 / F1).